Here is a 178-residue protein sequence, read N- to C-terminus: Large ribosomal subunit protein uL6 (178 aa).

The protein belongs to the universal ribosomal protein uL6 family. Part of the 50S ribosomal subunit.

Its function is as follows. This protein binds to the 23S rRNA, and is important in its secondary structure. It is located near the subunit interface in the base of the L7/L12 stalk, and near the tRNA binding site of the peptidyltransferase center. This is Large ribosomal subunit protein uL6 from Streptococcus agalactiae serotype Ia (strain ATCC 27591 / A909 / CDC SS700).